The chain runs to 374 residues: Protein TAB2 homolog, chloroplastic (374 aa).

The N-terminal 64 residues, 1–64 (MATLGFNTRR…SLSITKEQEV (64 aa)), are a transit peptide targeting the chloroplast. Residues 58-84 (ITKEQEVANEVEEDDPTSELSYLDPES) form a disordered region. A compositionally biased stretch (acidic residues) spans 64 to 74 (VANEVEEDDPT).

The protein resides in the plastid. It is found in the chloroplast. In terms of biological role, nuclear genome-encoded A/U-rich RNA-binding protein involved in the biogenesis of photosystem I (PSI) and II (PSII). Required for the light-controlled accumulation of PSI and PSII during early plant development. Does not seem to be required for the translation of mRNAs of the PSI subunits. The sequence is that of Protein TAB2 homolog, chloroplastic from Arabidopsis thaliana (Mouse-ear cress).